The primary structure comprises 77 residues: uncharacterized protein (77 aa).

A helical transmembrane segment spans residues 49-71; the sequence is LVIASLILAIILLGILYYISYQM.

The protein localises to the membrane. This is an uncharacterized protein from Archaeoglobus fulgidus (strain ATCC 49558 / DSM 4304 / JCM 9628 / NBRC 100126 / VC-16).